A 366-amino-acid chain; its full sequence is Chorismate synthase (366 aa).

Positions 48 and 54 each coordinate NADP(+). Residues 125-127 (RSS), 238-239 (NA), Gly278, 293-297 (KPTSS), and Arg319 each bind FMN.

This sequence belongs to the chorismate synthase family. Homotetramer. It depends on FMNH2 as a cofactor.

The enzyme catalyses 5-O-(1-carboxyvinyl)-3-phosphoshikimate = chorismate + phosphate. It functions in the pathway metabolic intermediate biosynthesis; chorismate biosynthesis; chorismate from D-erythrose 4-phosphate and phosphoenolpyruvate: step 7/7. In terms of biological role, catalyzes the anti-1,4-elimination of the C-3 phosphate and the C-6 proR hydrogen from 5-enolpyruvylshikimate-3-phosphate (EPSP) to yield chorismate, which is the branch point compound that serves as the starting substrate for the three terminal pathways of aromatic amino acid biosynthesis. This reaction introduces a second double bond into the aromatic ring system. This is Chorismate synthase from Thiobacillus denitrificans (strain ATCC 25259 / T1).